The sequence spans 570 residues: Sulfite reductase [NADPH] hemoprotein beta-component (570 aa).

[4Fe-4S] cluster contacts are provided by C434, C440, C479, and C483. C483 provides a ligand contact to siroheme.

It belongs to the nitrite and sulfite reductase 4Fe-4S domain family. As to quaternary structure, alpha(8)-beta(8). The alpha component is a flavoprotein, the beta component is a hemoprotein. Requires siroheme as cofactor. [4Fe-4S] cluster is required as a cofactor.

It catalyses the reaction hydrogen sulfide + 3 NADP(+) + 3 H2O = sulfite + 3 NADPH + 4 H(+). Its pathway is sulfur metabolism; hydrogen sulfide biosynthesis; hydrogen sulfide from sulfite (NADPH route): step 1/1. Component of the sulfite reductase complex that catalyzes the 6-electron reduction of sulfite to sulfide. This is one of several activities required for the biosynthesis of L-cysteine from sulfate. The sequence is that of Sulfite reductase [NADPH] hemoprotein beta-component from Shigella flexneri.